We begin with the raw amino-acid sequence, 430 residues long: Adenylosuccinate synthetase (430 aa).

Residues 13–19 (GDEGKGK) and 41–43 (GHT) contribute to the GTP site. Aspartate 14 functions as the Proton acceptor in the catalytic mechanism. Mg(2+)-binding residues include aspartate 14 and glycine 41. IMP-binding positions include 14–17 (DEGK), 39–42 (NAGH), threonine 130, arginine 144, glutamine 225, threonine 240, and arginine 304. Histidine 42 (proton donor) is an active-site residue. 300 to 306 (ATTGRKR) lines the substrate pocket. Residues arginine 306, 332–334 (KLD), and 414–416 (STG) each bind GTP.

It belongs to the adenylosuccinate synthetase family. Homodimer. Mg(2+) serves as cofactor.

The protein localises to the cytoplasm. It catalyses the reaction IMP + L-aspartate + GTP = N(6)-(1,2-dicarboxyethyl)-AMP + GDP + phosphate + 2 H(+). Its pathway is purine metabolism; AMP biosynthesis via de novo pathway; AMP from IMP: step 1/2. Functionally, plays an important role in the de novo pathway of purine nucleotide biosynthesis. Catalyzes the first committed step in the biosynthesis of AMP from IMP. The protein is Adenylosuccinate synthetase of Teredinibacter turnerae (strain ATCC 39867 / T7901).